We begin with the raw amino-acid sequence, 140 residues long: RxLR effector protein CRE9 (140 aa).

The N-terminal stretch at Met-1–Ala-24 is a signal peptide. The RxLR-dEER signature appears at Arg-43 to Arg-61. The chain crosses the membrane as a helical span at residues Leu-119–Leu-139.

This sequence belongs to the RxLR effector family.

It localises to the secreted. Its subcellular location is the host cell. The protein resides in the membrane. Functionally, effector that is involved in host plant infection. Contributes to virulence during the early infection stage, by inhibiting plant defense responses induced by both PAMP-triggered immunity (PTI) and effector-triggered immunity (ETI). The polypeptide is RxLR effector protein CRE9 (Phytophthora infestans (strain T30-4) (Potato late blight agent)).